A 290-amino-acid chain; its full sequence is Acetyl-coenzyme A carboxylase carboxyl transferase subunit beta (290 aa).

The 261-residue stretch at 30 to 290 (IMTKCPKCKK…HAGQEVNKDA (261 aa)) folds into the CoA carboxyltransferase N-terminal domain. The Zn(2+) site is built by C34, C37, C53, and C56. A C4-type zinc finger spans residues 34-56 (CPKCKKIMYTKELSENLNVCFNC).

The protein belongs to the AccD/PCCB family. As to quaternary structure, acetyl-CoA carboxylase is a heterohexamer composed of biotin carboxyl carrier protein (AccB), biotin carboxylase (AccC) and two subunits each of ACCase subunit alpha (AccA) and ACCase subunit beta (AccD). Zn(2+) is required as a cofactor.

It is found in the cytoplasm. The enzyme catalyses N(6)-carboxybiotinyl-L-lysyl-[protein] + acetyl-CoA = N(6)-biotinyl-L-lysyl-[protein] + malonyl-CoA. It functions in the pathway lipid metabolism; malonyl-CoA biosynthesis; malonyl-CoA from acetyl-CoA: step 1/1. Functionally, component of the acetyl coenzyme A carboxylase (ACC) complex. Biotin carboxylase (BC) catalyzes the carboxylation of biotin on its carrier protein (BCCP) and then the CO(2) group is transferred by the transcarboxylase to acetyl-CoA to form malonyl-CoA. The sequence is that of Acetyl-coenzyme A carboxylase carboxyl transferase subunit beta from Staphylococcus carnosus (strain TM300).